The chain runs to 428 residues: UPF0597 protein BF3560 (428 aa).

Belongs to the UPF0597 family.

The chain is UPF0597 protein BF3560 from Bacteroides fragilis (strain ATCC 25285 / DSM 2151 / CCUG 4856 / JCM 11019 / LMG 10263 / NCTC 9343 / Onslow / VPI 2553 / EN-2).